The chain runs to 152 residues: Large ribosomal subunit protein bL9 (152 aa).

It belongs to the bacterial ribosomal protein bL9 family.

In terms of biological role, binds to the 23S rRNA. This chain is Large ribosomal subunit protein bL9, found in Streptococcus thermophilus (strain ATCC BAA-491 / LMD-9).